Reading from the N-terminus, the 208-residue chain is Urease accessory protein UreE (208 aa).

A disordered region spans residues 145-195 (AEAHGHGQAHAHDHHDHDHHDHGHDHAHHDHAHHDHAHDHHGHDHAHDHAH).

The protein belongs to the UreE family.

Its subcellular location is the cytoplasm. In terms of biological role, involved in urease metallocenter assembly. Binds nickel. Probably functions as a nickel donor during metallocenter assembly. The protein is Urease accessory protein UreE of Azorhizobium caulinodans (strain ATCC 43989 / DSM 5975 / JCM 20966 / LMG 6465 / NBRC 14845 / NCIMB 13405 / ORS 571).